The primary structure comprises 414 residues: Acetate kinase (414 aa).

Asn-7 serves as a coordination point for Mg(2+). Lys-14 is an ATP binding site. Arg-99 contributes to the substrate binding site. Catalysis depends on Asp-157, which acts as the Proton donor/acceptor. Residues 217-221 and 341-345 contribute to the ATP site; these read HLGNG and GIGEN. Residue Glu-395 coordinates Mg(2+).

It belongs to the acetokinase family. As to quaternary structure, homodimer. It depends on Mg(2+) as a cofactor. Mn(2+) serves as cofactor.

It is found in the cytoplasm. It carries out the reaction acetate + ATP = acetyl phosphate + ADP. The protein operates within metabolic intermediate biosynthesis; acetyl-CoA biosynthesis; acetyl-CoA from acetate: step 1/2. Functionally, catalyzes the formation of acetyl phosphate from acetate and ATP. Can also catalyze the reverse reaction. The protein is Acetate kinase of Solibacter usitatus (strain Ellin6076).